A 165-amino-acid polypeptide reads, in one-letter code: Shikimate kinase (165 aa).

11–16 (GAGKTT) is a binding site for ATP. A Mg(2+)-binding site is contributed by Thr15. The substrate site is built by Asp33, Arg57, and Gly78. Arg116 is a binding site for ATP. Substrate is bound at residue Arg134.

This sequence belongs to the shikimate kinase family. In terms of assembly, monomer. Mg(2+) is required as a cofactor.

It localises to the cytoplasm. It carries out the reaction shikimate + ATP = 3-phosphoshikimate + ADP + H(+). It functions in the pathway metabolic intermediate biosynthesis; chorismate biosynthesis; chorismate from D-erythrose 4-phosphate and phosphoenolpyruvate: step 5/7. Its function is as follows. Catalyzes the specific phosphorylation of the 3-hydroxyl group of shikimic acid using ATP as a cosubstrate. This is Shikimate kinase from Bacillus cereus (strain AH187).